The sequence spans 185 residues: Elongation factor P (185 aa).

The protein belongs to the elongation factor P family.

The protein resides in the cytoplasm. The protein operates within protein biosynthesis; polypeptide chain elongation. Its function is as follows. Involved in peptide bond synthesis. Stimulates efficient translation and peptide-bond synthesis on native or reconstituted 70S ribosomes in vitro. Probably functions indirectly by altering the affinity of the ribosome for aminoacyl-tRNA, thus increasing their reactivity as acceptors for peptidyl transferase. The sequence is that of Elongation factor P from Bacillus cereus (strain G9842).